Here is a 464-residue protein sequence, read N- to C-terminus: Argininosuccinate lyase (464 aa).

The protein belongs to the lyase 1 family. Argininosuccinate lyase subfamily.

Its subcellular location is the cytoplasm. It carries out the reaction 2-(N(omega)-L-arginino)succinate = fumarate + L-arginine. It participates in amino-acid biosynthesis; L-arginine biosynthesis; L-arginine from L-ornithine and carbamoyl phosphate: step 3/3. The sequence is that of Argininosuccinate lyase from Herminiimonas arsenicoxydans.